Consider the following 360-residue polypeptide: GDSL esterase/lipase At2g31540 (360 aa).

An N-terminal signal peptide occupies residues 1-23 (MSTSKAITLTLFIATTLLAPCNA). The active-site Nucleophile is S42. 2 N-linked (GlcNAc...) asparagine glycosylation sites follow: N104 and N326. Catalysis depends on residues D334 and H337.

Belongs to the 'GDSL' lipolytic enzyme family.

The protein localises to the secreted. This is GDSL esterase/lipase At2g31540 from Arabidopsis thaliana (Mouse-ear cress).